A 551-amino-acid polypeptide reads, in one-letter code: DNA mismatch repair protein MutL (551 aa).

This sequence belongs to the DNA mismatch repair MutL/HexB family.

This protein is involved in the repair of mismatches in DNA. It is required for dam-dependent methyl-directed DNA mismatch repair. May act as a 'molecular matchmaker', a protein that promotes the formation of a stable complex between two or more DNA-binding proteins in an ATP-dependent manner without itself being part of a final effector complex. The protein is DNA mismatch repair protein MutL of Thermosipho melanesiensis (strain DSM 12029 / CIP 104789 / BI429).